The sequence spans 522 residues: MGKKGKKEKKGRGAEKTAAKMEKKVSKRSRKEEEDLEALIAHFQTLDAKRTQTVEAPCPPPSPRLNASLSVHPEKDELILFGGEYFNGQKTFLYNELYVYNIRKDTWTKVDIPSPPPRRCAHQAVVVPQGGGQLWVFGGEFASPNGEQFYHYKDLWVLHLATKTWEQVKSTGSPSGRSGHRMVAWKRQLILFGGFHESTRDYIYYNDVYTFNLDTFTWSKLSPSGTGPTPRSGCQMSVTPQGGIIIYGGYSKQRVKKDVDRGTRHSDMFLLKPEDGREDKWVWTRMNPSGVKPTPRSGFSAAMALNHQTLFFGGVCDEEEEESLAGEFFNDLYFYDATRNRWFEGQLKGPKSEKKKRRRGRKEESEGGSKLACGGAGTQGPVQVVKEVVAEDGTVVTIKQVLAAPGSAGQPRSEDEDSPEEAGSSAPGPCPRSNAMLAVKHGVLYVYGGMFEAGDRQVTLSDLHCLDLHRMEAWKALVEMDPETQEWLEETDSEEDSEEVEGAEGGDEDEDEDSREESGAED.

Over residues M1–K10 the composition is skewed to basic residues. A disordered region spans residues M1–E33. A compositionally biased stretch (basic and acidic residues) spans G11–K24. Kelch repeat units follow at residues E77–Q129, Q133–R187, Q188–Q241, G243–S289, and Q308–R361. Disordered regions lie at residues Q346 to T378, L402 to R432, and D481 to D522. 2 positions are modified to phosphoserine: S413 and S418. Residues V443–E494 form a Kelch 6 repeat.

This Pongo abelii (Sumatran orangutan) protein is Kelch domain-containing protein 4 (KLHDC4).